Here is a 100-residue protein sequence, read N- to C-terminus: MIDYNNVFGAGVVAAVSTAGTPHAATSAAAGQYRVAATGTRPWIGAILNYEVSPIFARWPRNRNHQDPWHSFWANSLPTWYRSFLKKDSHQTRKQMKRTC.

Its subcellular location is the secreted. This is an uncharacterized protein from Mycobacterium leprae (strain TN).